Reading from the N-terminus, the 1022-residue chain is Probable E3 ubiquitin-protein ligase HERC6 (1022 aa).

5 RCC1 repeats span residues 41–92 (NHRV…AVCH), 93–145 (KGRV…ALSK), 147–198 (SQVF…ALSL), 200–253 (GTSF…VLTQ), and 254–304 (DGKV…AYVH). In terms of domain architecture, HECT spans 693-1017 (EATDFCKVLV…INNNRGFVSP (325 aa)). C985 acts as the Glycyl thioester intermediate in catalysis.

As to expression, detected in brain, heart, placenta and testis.

The protein localises to the cytoplasm. Its subcellular location is the cytosol. The catalysed reaction is S-ubiquitinyl-[E2 ubiquitin-conjugating enzyme]-L-cysteine + [acceptor protein]-L-lysine = [E2 ubiquitin-conjugating enzyme]-L-cysteine + N(6)-ubiquitinyl-[acceptor protein]-L-lysine.. Its pathway is protein modification; protein ubiquitination. Its function is as follows. E3 ubiquitin-protein ligase which accepts ubiquitin from an E2 ubiquitin-conjugating enzyme in the form of a thioester and then directly transfers the ubiquitin to targeted substrates. The chain is Probable E3 ubiquitin-protein ligase HERC6 (HERC6) from Homo sapiens (Human).